Reading from the N-terminus, the 753-residue chain is MADKRKLQGEIDRCLKKVSEGVEQFEDIWQKLHNAANANQKEKYEADLKKEIKKLQRLRDQIKTWVASNEIKDKRQLIDNRKLIETQMERFKVVERETKTKAYSKEGLGLAQKVDPAQKEKEEVGQWLTNTIDTLNMQVDQFESEVESLSVQTRKKKGDKDKQDRIEGLKRHIEKHRYHVRMLETILRMLDNDSILVDAIRKIKDDVEYYVDSSQDPDFEENEFLYDDLDLEDIPQALVATSPPSHSHMEDEIFNQSSSTPTSTTSSSPIPPSPANCTTENSEDDKKRGRSTDSEVSQSPAKNGSKPVHSNQHPQSPAVPPTYPSGPPPAASALSTTPGNNGVPAPAAPPSALGPKASPAPSHNSGTPAPYAQAVAPPAPSGPSTTQPRPPSVQPSGGGGGGSGGGGSSSSSNSSAGGGAGKQNGATSYSSVVADSPAEVALSSSGGNNASSQALGPPSGPHNPPPSTSKEPSAAAPTGAGGVAPGSGNNSGGPSLLVPLPVNPPSSPTPSFSDAKAAGALLNGPPQFSTAPEIKAPEPLSSLKSMAERAAISSGIEDPVPTLHLTERDIILSSTSAPPASAQPPLQLSEVNIPLSLGVCPLGPVPLTKEQLYQQAMEEAAWHHMPHPSDSERIRQYLPRNPCPTPPYHHQMPPPHSDTVEFYQRLSTETLFFIFYYLEGTKAQYLAAKALKKQSWRFHTKYMMWFQRHEEPKTITDEFEQGTYIYFDYEKWGQRKKEGFTFEYRYLEDRDLQ.

The interval 240-534 (ATSPPSHSHM…PPQFSTAPEI (295 aa)) is disordered. Residues 257 to 268 (SSSTPTSTTSSS) show a composition bias toward low complexity. The span at 284–293 (DDKKRGRSTD) shows a compositional bias: basic and acidic residues. Phosphothreonine is present on Thr-292. The segment covering 294-315 (SEVSQSPAKNGSKPVHSNQHPQ) has biased composition (polar residues). Ser-299 is subject to Phosphoserine. Residues 317–330 (PAVPPTYPSGPPPA) are compositionally biased toward pro residues. Residues 350-376 (PSALGPKASPAPSHNSGTPAPYAQAVA) are compositionally biased toward low complexity. Positions 396–408 (SGGGGGGSGGGGS) are enriched in gly residues. Residues 424–433 (NGATSYSSVV) show a composition bias toward polar residues. The span at 441-457 (ALSSSGGNNASSQALGP) shows a compositional bias: low complexity. Over residues 458-467 (PSGPHNPPPS) the composition is skewed to pro residues. The span at 479-491 (GAGGVAPGSGNNS) shows a compositional bias: gly residues. A Phosphoserine modification is found at Ser-542. A repressor domain region spans residues 661–753 (EFYQRLSTET…YRYLEDRDLQ (93 aa)).

Belongs to the CNOT2/3/5 family. As to quaternary structure, component of the CCR4-NOT complex; distinct complexes seem to exist that differ in the participation of probably mutually exclusive catalytic subunits. In the complex interacts directly with CNOT2. Interacts with TIP120B and NANOS2. Interacts with EBF1. Interacts in an RNA-independent manner with BICC1 (via KH domains). As to expression, ubiquitous. Highly expressed in brain, heart, thymus, spleen, kidney, liver, small intestine, lung and peripheral blood leukocytes.

It localises to the cytoplasm. The protein localises to the nucleus. Its subcellular location is the P-body. Its function is as follows. Component of the CCR4-NOT complex which is one of the major cellular mRNA deadenylases and is linked to various cellular processes including bulk mRNA degradation, miRNA-mediated repression, translational repression during translational initiation and general transcription regulation. Additional complex functions may be a consequence of its influence on mRNA expression. May be involved in metabolic regulation; may be involved in recruitment of the CCR4-NOT complex to deadenylation target mRNAs involved in energy metabolism. Involved in mitotic progression and regulation of the spindle assembly checkpoint by regulating the stability of MAD1L1 mRNA. Can repress transcription and may link the CCR4-NOT complex to transcriptional regulation; the repressive function may involve histone deacetylases. Involved in the maintenance of embryonic stem (ES) cell identity. This is CCR4-NOT transcription complex subunit 3 from Homo sapiens (Human).